The primary structure comprises 788 residues: Glycerol-3-phosphate acyltransferase (788 aa).

The tract at residues 104–135 is disordered; the sequence is LLPGRDPYHPNPRQQRRILRSDPQRARVMAGE. Residues 271–276 carry the HXXXXD motif motif; it reads SHRSYI.

The protein belongs to the GPAT/DAPAT family.

It is found in the cell membrane. It carries out the reaction sn-glycerol 3-phosphate + an acyl-CoA = a 1-acyl-sn-glycero-3-phosphate + CoA. Its pathway is phospholipid metabolism; CDP-diacylglycerol biosynthesis; CDP-diacylglycerol from sn-glycerol 3-phosphate: step 1/3. The protein is Glycerol-3-phosphate acyltransferase of Mycobacterium marinum (strain ATCC BAA-535 / M).